A 532-amino-acid polypeptide reads, in one-letter code: Pentatricopeptide repeat-containing protein At4g02820, mitochondrial (532 aa).

Residues 1–28 (MNKNMLVRSARPTLASIHRLFSAAAAAT) constitute a mitochondrion transit peptide. The tract at residues 35-56 (PVVKPRSGGGKGGESANKKETV) is disordered. PPR repeat units lie at residues 161 to 195 (GHAACTSLLHSYVQNKLSDKAEALFEKMGECGFLK), 196 to 226 (SCLPYNHMLSMYISRGQFEKVPVLIKELKIR), 230 to 264 (DIVTYNLWLTAFASGNDVEGAEKVYLKAKEEKLNP), 265 to 295 (DWVTYSVLTNLYAKTDNVEKARLALKEMEKL), 300 to 330 (NRVAYASLISLHANLGDKDGVNLTWKKVKSS), 335 to 365 (NDAEYLSMISAVVKLGEFEQAKGLYDEWESV), 370 to 404 (DARIPNLILAEYMNRDEVLLGEKFYERIVEKGINP), 405 to 435 (SYSTWEILTWAYLKRKDMEKVLDCFGKAIDS), 442 to 472 (NVRLVKGACKELEEQGNVKGAEKLMTLLQKA), and 476 to 512 (NTQLYNSLLRTYAKAGEMALIVEERMAKDNVELDEET).

It belongs to the PPR family. P subfamily.

It is found in the mitochondrion. The protein is Pentatricopeptide repeat-containing protein At4g02820, mitochondrial of Arabidopsis thaliana (Mouse-ear cress).